A 160-amino-acid chain; its full sequence is Surface-adhesin protein E (160 aa).

A signal peptide spans 1–15; it reads MKKIILTLSLGLLTA. Residue Cys16 is the site of N-palmitoyl cysteine attachment. Cys16 carries S-diacylglycerol cysteine lipidation.

Its subcellular location is the cell outer membrane. The protein localises to the cell surface. In terms of biological role, acts as a multifunctional adhesin involved in direct interactions with host epithelial cells and host proteins. This Haemophilus influenzae (strain ATCC 51907 / DSM 11121 / KW20 / Rd) protein is Surface-adhesin protein E (pe).